The sequence spans 804 residues: Phenylalanine--tRNA ligase beta subunit (804 aa).

The 117-residue stretch at 39–155 (EEGLKKLVVG…ADVKPGQDVY (117 aa)) folds into the tRNA-binding domain. The B5 domain maps to 408–483 (REPVVVKTTV…RIYGYDNLKS (76 aa)). Mg(2+) is bound by residues D461, D467, E470, and E471. In terms of domain architecture, FDX-ACB spans 711–804 (PKFPAIERDL…LENDLDIKVR (94 aa)).

The protein belongs to the phenylalanyl-tRNA synthetase beta subunit family. Type 1 subfamily. Tetramer of two alpha and two beta subunits. The cofactor is Mg(2+).

Its subcellular location is the cytoplasm. The catalysed reaction is tRNA(Phe) + L-phenylalanine + ATP = L-phenylalanyl-tRNA(Phe) + AMP + diphosphate + H(+). The protein is Phenylalanine--tRNA ligase beta subunit of Lactobacillus acidophilus (strain ATCC 700396 / NCK56 / N2 / NCFM).